The following is a 118-amino-acid chain: RNA guanine-N7 methyltransferase activating subunit (118 aa).

Thr-2 carries the N-acetylthreonine modification. The tract at residues 2-55 is interaction with RNMT; it reads TDTAEAVPNFEEMFASRFTENDKEYQEYLKRPPESPPIVEEWNSRAGGNQRNRG. Positions 30–118 are disordered; the sequence is LKRPPESPPI…YNQRPPYGYY (89 aa). Ser-36 is subject to Phosphoserine. The short motif at 36 to 42 is the RNMT-activating domain element; sequence SPPIVEE. A compositionally biased stretch (low complexity) spans 45-56; that stretch reads SRAGGNQRNRGN. The tract at residues 56-118 is RNA-binding; sequence NRLQDNRQFR…YNQRPPYGYY (63 aa). Positions 57–70 are enriched in basic and acidic residues; sequence RLQDNRQFRGRDNR. A compositionally biased stretch (polar residues) spans 76–93; sequence DNRSNQWHGRSWGNNYPQ. Arg-85 bears the Omega-N-methylarginine mark. Ser-86 is subject to Phosphoserine. Over residues 98–109 the composition is skewed to low complexity; the sequence is PYYPQQYGHYGY.

It belongs to the RAM family. In terms of assembly, interacts with RNMT; this interaction enhances mRNA binding and cap methyltransferase activity.

The protein localises to the nucleus. Its function is as follows. Regulatory subunit of the mRNA-capping methyltransferase RNMT:RAMAC complex that methylates the N7 position of the added guanosine to the 5'-cap structure of mRNAs. Promotes the recruitment of the methyl donor, S-adenosyl-L-methionine, to RNMT. Regulates RNMT expression by a post-transcriptional stabilizing mechanism. Binds RNA. The protein is RNA guanine-N7 methyltransferase activating subunit (RAMAC) of Pongo abelii (Sumatran orangutan).